The primary structure comprises 96 residues: Large ribosomal subunit protein bL27 (96 aa).

The propeptide occupies 1–11; the sequence is MLKTLENLQLF. The disordered stretch occupies residues 13 to 36; the sequence is HKKGGGSTSNGRDSQAKRLGAKAA.

It belongs to the bacterial ribosomal protein bL27 family. In terms of processing, the N-terminus is cleaved by ribosomal processing cysteine protease Prp.

The protein is Large ribosomal subunit protein bL27 of Streptococcus thermophilus (strain CNRZ 1066).